Reading from the N-terminus, the 608-residue chain is Glutamine--fructose-6-phosphate aminotransferase [isomerizing] (608 aa).

The active-site Nucleophile; for GATase activity is cysteine 2. Residues 2 to 217 enclose the Glutamine amidotransferase type-2 domain; sequence CGIVGILGRE…DGDWVVLTRN (216 aa). SIS domains follow at residues 284-423 and 456-598; these read LPFD…ARGE and LARE…VDQP. Lysine 603 acts as the For Fru-6P isomerization activity in catalysis.

As to quaternary structure, homodimer.

The protein localises to the cytoplasm. The catalysed reaction is D-fructose 6-phosphate + L-glutamine = D-glucosamine 6-phosphate + L-glutamate. Its function is as follows. Catalyzes the first step in hexosamine metabolism, converting fructose-6P into glucosamine-6P using glutamine as a nitrogen source. In Bradyrhizobium diazoefficiens (strain JCM 10833 / BCRC 13528 / IAM 13628 / NBRC 14792 / USDA 110), this protein is Glutamine--fructose-6-phosphate aminotransferase [isomerizing] (glmS).